The chain runs to 295 residues: Ethanolamine ammonia-lyase small subunit (295 aa).

V207, E228, and C258 together coordinate adenosylcob(III)alamin.

This sequence belongs to the EutC family. As to quaternary structure, the basic unit is a heterodimer which dimerizes to form tetramers. The heterotetramers trimerize; 6 large subunits form a core ring with 6 small subunits projecting outwards. Adenosylcob(III)alamin is required as a cofactor.

It is found in the bacterial microcompartment. It carries out the reaction ethanolamine = acetaldehyde + NH4(+). The protein operates within amine and polyamine degradation; ethanolamine degradation. Catalyzes the deamination of various vicinal amino-alcohols to oxo compounds. Allows this organism to utilize ethanolamine as the sole source of nitrogen and carbon in the presence of external vitamin B12. This Escherichia coli (strain SMS-3-5 / SECEC) protein is Ethanolamine ammonia-lyase small subunit.